Consider the following 204-residue polypeptide: UPF0637 protein Lm4b_01081 (204 aa).

Belongs to the UPF0637 family.

The sequence is that of UPF0637 protein Lm4b_01081 from Listeria monocytogenes serotype 4b (strain CLIP80459).